The sequence spans 554 residues: 7-epi-sesquithujene synthase (554 aa).

Mg(2+) contacts are provided by D308 and D312. Residues D308, D312, R449, and N452 each contribute to the substrate site. Positions 308 to 312 (DDMFD) match the DDXXD motif motif. Positions 452, 456, and 460 each coordinate Mg(2+).

It belongs to the terpene synthase family. In terms of assembly, monomer. Requires Mg(2+) as cofactor. Mn(2+) is required as a cofactor. In terms of tissue distribution, highly expressed in the husk. Detected in leaf sheaths and leaves.

The protein resides in the cytoplasm. The enzyme catalyses (2E,6E)-farnesyl diphosphate = 7-epi-sesquithujene + diphosphate. It carries out the reaction (2E,6E)-farnesyl diphosphate = (1S,5S,6R)-alpha-bergamotene + diphosphate. The catalysed reaction is (2E,6E)-farnesyl diphosphate = (E)-beta-farnesene + diphosphate. It catalyses the reaction (2E,6E)-farnesyl diphosphate = (S)-beta-bisabolene + diphosphate. The enzyme catalyses (2Z,6E)-farnesyl diphosphate = (-)-beta-curcumene + diphosphate. It carries out the reaction (2E,6E)-farnesyl diphosphate = gamma-curcumene + diphosphate. The catalysed reaction is (2E,6E)-farnesyl diphosphate = sesquisabinene A + diphosphate. It functions in the pathway secondary metabolite biosynthesis; terpenoid biosynthesis. In terms of biological role, sesquiterpene synthase involved in the production after herbivore attack of a blend of volatiles that attracts natural enemies of herbivores. Converts farnesyl diphosphate to (S)-beta-bisabolene and 7-epi-sesquithujene, along with a mixture of more than 20 other minor sesquiterpene olefins. Can also act in vitro as a monoterpene synthase, converting geranyl diphosphate to (S)-(-)-limonene, beta-myrcene and 11 other monoterpenes. The protein is 7-epi-sesquithujene synthase of Zea mays (Maize).